A 415-amino-acid polypeptide reads, in one-letter code: Gamma-glutamyl phosphate reductase (415 aa).

The protein belongs to the gamma-glutamyl phosphate reductase family.

Its subcellular location is the cytoplasm. It catalyses the reaction L-glutamate 5-semialdehyde + phosphate + NADP(+) = L-glutamyl 5-phosphate + NADPH + H(+). It functions in the pathway amino-acid biosynthesis; L-proline biosynthesis; L-glutamate 5-semialdehyde from L-glutamate: step 2/2. Its function is as follows. Catalyzes the NADPH-dependent reduction of L-glutamate 5-phosphate into L-glutamate 5-semialdehyde and phosphate. The product spontaneously undergoes cyclization to form 1-pyrroline-5-carboxylate. The polypeptide is Gamma-glutamyl phosphate reductase (Listeria monocytogenes serotype 4b (strain F2365)).